The chain runs to 316 residues: Putative mannose-6-phosphate isomerase YvyI (316 aa).

Zn(2+)-binding residues include histidine 98, glutamate 116, and histidine 173. Residue arginine 193 is part of the active site.

This sequence belongs to the mannose-6-phosphate isomerase type 1 family. Zn(2+) is required as a cofactor.

The enzyme catalyses D-mannose 6-phosphate = D-fructose 6-phosphate. This chain is Putative mannose-6-phosphate isomerase YvyI (yvyI), found in Bacillus subtilis (strain 168).